Here is a 210-residue protein sequence, read N- to C-terminus: MRVSKANALKRWKGSQRRIGITGGIASGKTSIGKYIESVKNTPILDADMFSREALTANQTIKDTIINRYGRTIVDKENTNSKTINRAALGEIIFHDKNERIWLENLLHPIIEKRFEEELEKHKLSSTIVLIIPLLFEANFTYLCSEVWLIYCSLDEQYERLMKRDGLNKEQAKYRIEAQLPLESKKILSDHIIDNTNKLDLSYPQVEVLL.

A DPCK domain is found at 18–210 (RIGITGGIAS…LSYPQVEVLL (193 aa)). 26–31 (ASGKTS) is an ATP binding site.

This sequence belongs to the CoaE family.

The protein localises to the cytoplasm. The catalysed reaction is 3'-dephospho-CoA + ATP = ADP + CoA + H(+). It participates in cofactor biosynthesis; coenzyme A biosynthesis; CoA from (R)-pantothenate: step 5/5. Functionally, catalyzes the phosphorylation of the 3'-hydroxyl group of dephosphocoenzyme A to form coenzyme A. The sequence is that of Dephospho-CoA kinase from Prochlorococcus marinus (strain SARG / CCMP1375 / SS120).